The sequence spans 524 residues: Cytochrome P450 monooxygenase patH (524 aa).

At 1–4 (MEPF) the chain is on the cytoplasmic side. The helical transmembrane segment at 5–22 (LLLLLVLLPAIVLVRYAF) threads the bilayer. Residues 23–524 (TYGHRTSTMP…ADVFSRFTEG (502 aa)) lie on the Lumenal side of the membrane. Asn266 carries an N-linked (GlcNAc...) asparagine glycan. Cys442 contacts heme.

Belongs to the cytochrome P450 family. It depends on heme as a cofactor.

It localises to the endoplasmic reticulum membrane. The enzyme catalyses 3-methylphenol + reduced [NADPH--hemoprotein reductase] + O2 = 3-hydroxybenzyl alcohol + oxidized [NADPH--hemoprotein reductase] + H2O + H(+). The protein operates within mycotoxin biosynthesis; patulin biosynthesis. Cytochrome P450 monooxygenase; part of the gene cluster that mediates the biosynthesis of patulin, an acetate-derived tetraketide mycotoxin produced by several fungal species that shows antimicrobial properties against several bacteria. PatH catalyzes the conversion of m-cresol into m-hydroxybenzyl alcohol. The pathway begins with the synthesis of 6-methylsalicylic acid by the polyketide synthase (PKS) patK via condensation of acetate and malonate units. The 6-methylsalicylic acid decarboxylase patG then catalyzes the decarboxylation of 6-methylsalicylic acid to yield m-cresol (also known as 3-methylphenol). These first reactions occur in the cytosol. The intermediate m-cresol is then transported into the endoplasmic reticulum where the cytochrome P450 monooxygenase patH converts it to m-hydroxybenzyl alcohol, which is further converted to gentisyl alcohol by the cytochrome P450 monooxygenase patI. The oxidoreductases patJ and patO further convert gentisyl alcohol to isoepoxydon in the vacuole. PatN catalyzes then the transformation of isoepoxydon into phyllostine. The cluster protein patF is responsible for the conversion from phyllostine to neopatulin whereas the alcohol dehydrogenase patD converts neopatulin to E-ascladiol. The steps between isoepoxydon and E-ascladiol occur in the cytosol, and E-ascladiol is probably secreted to the extracellular space by one of the cluster-specific transporters patC or patM. Finally, the secreted patulin synthase patE catalyzes the conversion of E-ascladiol to patulin. The chain is Cytochrome P450 monooxygenase patH from Penicillium expansum (Blue mold rot fungus).